The primary structure comprises 597 residues: uncharacterized protein (597 aa).

In terms of domain architecture, PWWP spans 16 to 78 (VGRLVWVRRR…LENSKTVKAF (63 aa)). Disordered stretches follow at residues 126–210 (NLCN…MRGL) and 449–482 (QLKG…STPH). The segment covering 134-143 (EDSKRCLSGK) has biased composition (basic and acidic residues). Residues 144-161 (EDEDSGSSDAEETEDDEL) show a composition bias toward acidic residues. The segment covering 166-185 (EQLQSSISSQEMNNVGASKV) has biased composition (polar residues). The span at 450-460 (LKGKRNSRQMS) shows a compositional bias: basic residues. Positions 461–470 (KKQEERRNVY) are enriched in basic and acidic residues.

This is an uncharacterized protein from Arabidopsis thaliana (Mouse-ear cress).